Consider the following 281-residue polypeptide: 2-dehydro-3-deoxyphosphooctonate aldolase (281 aa).

The protein belongs to the KdsA family.

The protein localises to the cytoplasm. The catalysed reaction is D-arabinose 5-phosphate + phosphoenolpyruvate + H2O = 3-deoxy-alpha-D-manno-2-octulosonate-8-phosphate + phosphate. It participates in carbohydrate biosynthesis; 3-deoxy-D-manno-octulosonate biosynthesis; 3-deoxy-D-manno-octulosonate from D-ribulose 5-phosphate: step 2/3. It functions in the pathway bacterial outer membrane biogenesis; lipopolysaccharide biosynthesis. The chain is 2-dehydro-3-deoxyphosphooctonate aldolase from Psychromonas ingrahamii (strain DSM 17664 / CCUG 51855 / 37).